A 120-amino-acid polypeptide reads, in one-letter code: Ribonuclease P protein component (120 aa).

The protein belongs to the RnpA family. Consists of a catalytic RNA component (M1 or rnpB) and a protein subunit.

It catalyses the reaction Endonucleolytic cleavage of RNA, removing 5'-extranucleotides from tRNA precursor.. In terms of biological role, RNaseP catalyzes the removal of the 5'-leader sequence from pre-tRNA to produce the mature 5'-terminus. It can also cleave other RNA substrates such as 4.5S RNA. The protein component plays an auxiliary but essential role in vivo by binding to the 5'-leader sequence and broadening the substrate specificity of the ribozyme. This Latilactobacillus sakei subsp. sakei (strain 23K) (Lactobacillus sakei subsp. sakei) protein is Ribonuclease P protein component.